The following is a 453-amino-acid chain: Putative sodium-coupled neutral amino acid transporter 11 (453 aa).

A compositionally biased stretch (polar residues) spans 1–10 (MSYQQPQLSG). The tract at residues 1–34 (MSYQQPQLSGPLQRETDSSDRESLISGHEHGGKS) is disordered. Residues 14–32 (RETDSSDRESLISGHEHGG) are compositionally biased toward basic and acidic residues. 11 consecutive transmembrane segments (helical) span residues 39–59 (AVFN…PYSM), 66–86 (LGIL…VLLI), 106–126 (GFPG…IAMI), 150–170 (GWFI…TLPL), 179–199 (LGKI…IVMT), 222–242 (AIQA…CFLV), 262–282 (ILVS…TFTG), 299–319 (VTFG…IECF), 337–357 (VFHT…SLMI), 359–379 (CLGI…IFII), and 398–418 (IMAC…FVMA). 2 N-linked (GlcNAc...) asparagine glycosylation sites follow: Asn-438 and Asn-443.

This sequence belongs to the amino acid/polyamine transporter 2 family.

Its subcellular location is the membrane. Putative sodium-dependent amino acid/proton antiporter. The chain is Putative sodium-coupled neutral amino acid transporter 11 (Slc38a11) from Mus musculus (Mouse).